The chain runs to 494 residues: Cardiolipin synthase (494 aa).

The next 2 membrane-spanning stretches (helical) occupy residues 14–34 (IILNSIFIGAFILNLLFAFTI) and 45–65 (IWAWLLVLVFLPLFGFILYLL). 2 PLD phosphodiesterase domains span residues 229–256 (MNNRNHRKIVVIDGQIGYVGGFNVGDEY) and 407–434 (DNGFLHSKTLVIDDEIASVGTANMDHRS). Active-site residues include histidine 234, lysine 236, aspartate 241, histidine 412, lysine 414, and aspartate 419.

The protein belongs to the phospholipase D family. Cardiolipin synthase subfamily.

Its subcellular location is the cell membrane. The enzyme catalyses 2 a 1,2-diacyl-sn-glycero-3-phospho-(1'-sn-glycerol) = a cardiolipin + glycerol. Catalyzes the reversible phosphatidyl group transfer from one phosphatidylglycerol molecule to another to form cardiolipin (CL) (diphosphatidylglycerol) and glycerol. The chain is Cardiolipin synthase (cls) from Staphylococcus aureus (strain Mu50 / ATCC 700699).